The following is a 107-amino-acid chain: ATP synthase subunit c (107 aa).

Helical transmembrane passes span 4-24, 29-49, and 74-94; these read IVFL…SMNQ, FSIL…AIGM, and MFIA…IALI.

This sequence belongs to the ATPase C chain family. In terms of assembly, F-type ATPases have 2 components, F(1) - the catalytic core - and F(0) - the membrane proton channel. F(1) has five subunits: alpha(3), beta(3), gamma(1), delta(1), epsilon(1). F(0) has three main subunits: a(1), b(2) and c(10-14). The alpha and beta chains form an alternating ring which encloses part of the gamma chain. F(1) is attached to F(0) by a central stalk formed by the gamma and epsilon chains, while a peripheral stalk is formed by the delta and b chains.

It is found in the cell inner membrane. In terms of biological role, f(1)F(0) ATP synthase produces ATP from ADP in the presence of a proton or sodium gradient. F-type ATPases consist of two structural domains, F(1) containing the extramembraneous catalytic core and F(0) containing the membrane proton channel, linked together by a central stalk and a peripheral stalk. During catalysis, ATP synthesis in the catalytic domain of F(1) is coupled via a rotary mechanism of the central stalk subunits to proton translocation. Functionally, key component of the F(0) channel; it plays a direct role in translocation across the membrane. A homomeric c-ring of between 10-14 subunits forms the central stalk rotor element with the F(1) delta and epsilon subunits. This chain is ATP synthase subunit c, found in Campylobacter lari (strain RM2100 / D67 / ATCC BAA-1060).